Reading from the N-terminus, the 128-residue chain is Gastrotropin (128 aa).

An N-acetylalanine modification is found at A2.

Belongs to the calycin superfamily. Fatty-acid binding protein (FABP) family. As to expression, predominantly expressed in ileum; also expressed in ovary.

The protein localises to the cytoplasm. It localises to the membrane. In terms of biological role, binds to bile acids and is involved in enterohepatic bile acid metabolism. Required for efficient apical to basolateral transport of conjugated bile acids in ileal enterocytes. Stimulates gastric acid and pepsinogen secretion. The polypeptide is Gastrotropin (Fabp6) (Rattus norvegicus (Rat)).